The sequence spans 551 residues: Cytochrome c oxidase subunit 1 (551 aa).

The chain crosses the membrane as a helical span at residues 34 to 54 (TLYLYSGVWGGLFGASLSLMI). Gly-62 contacts Ca(2+). His-79 contacts Fe(II)-heme a. A run of 6 helical transmembrane segments spans residues 81-101 (LMMI…NWLI), 126-146 (ALYL…GWTI), 163-183 (VLIV…INFA), 209-229 (TAVL…MILF), 252-272 (LFWF…FGVM), and 285-305 (VFGL…GCMV). Cu cation is bound at residue His-258. The 1'-histidyl-3'-tyrosine (His-Tyr) cross-link spans 258 to 262 (HPEVY). O2 is bound at residue Tyr-262. Cu cation contacts are provided by His-308 and His-309. Transmembrane regions (helical) follow at residues 326–346 (ATMV…ATMA) and 356–376 (AYWS…GVLL). Residues His-386 and Asp-387 each coordinate Mg(2+). Transmembrane regions (helical) follow at residues 391–411 (VVAH…FCGL), 432–452 (FMAM…LGLS), and 475–495 (GSAV…EALV). Heme a3 is bound at residue His-394. His-396 lines the Fe(II)-heme a pocket.

This sequence belongs to the heme-copper respiratory oxidase family. In terms of assembly, component of the cytochrome c oxidase (complex IV, CIV), a multisubunit enzyme composed of a catalytic core of 3 subunits and several supernumerary subunits. The complex exists as a monomer or a dimer and forms supercomplexes (SCs) in the inner mitochondrial membrane with ubiquinol-cytochrome c oxidoreductase (cytochrome b-c1 complex, complex III, CIII). The cofactor is heme. Requires Cu cation as cofactor.

Its subcellular location is the mitochondrion inner membrane. It catalyses the reaction 4 Fe(II)-[cytochrome c] + O2 + 8 H(+)(in) = 4 Fe(III)-[cytochrome c] + 2 H2O + 4 H(+)(out). It participates in energy metabolism; oxidative phosphorylation. In terms of biological role, component of the cytochrome c oxidase, the last enzyme in the mitochondrial electron transport chain which drives oxidative phosphorylation. The respiratory chain contains 3 multisubunit complexes succinate dehydrogenase (complex II, CII), ubiquinol-cytochrome c oxidoreductase (cytochrome b-c1 complex, complex III, CIII) and cytochrome c oxidase (complex IV, CIV), that cooperate to transfer electrons derived from NADH and succinate to molecular oxygen, creating an electrochemical gradient over the inner membrane that drives transmembrane transport and the ATP synthase. Cytochrome c oxidase is the component of the respiratory chain that catalyzes the reduction of oxygen to water. Electrons originating from reduced cytochrome c in the intermembrane space (IMS) are transferred via the dinuclear copper A center (CU(A)) of subunit 2 and heme A of subunit 1 to the active site in subunit 1, a binuclear center (BNC) formed by heme A3 and copper B (CU(B)). The BNC reduces molecular oxygen to 2 water molecules using 4 electrons from cytochrome c in the IMS and 4 protons from the mitochondrial matrix. This chain is Cytochrome c oxidase subunit 1 (COI), found in Mytilus edulis (Blue mussel).